A 94-amino-acid chain; its full sequence is Large ribosomal subunit protein bL25 (94 aa).

This sequence belongs to the bacterial ribosomal protein bL25 family. In terms of assembly, part of the 50S ribosomal subunit; part of the 5S rRNA/L5/L18/L25 subcomplex. Contacts the 5S rRNA. Binds to the 5S rRNA independently of L5 and L18.

Functionally, this is one of the proteins that binds to the 5S RNA in the ribosome where it forms part of the central protuberance. The chain is Large ribosomal subunit protein bL25 from Salmonella gallinarum (strain 287/91 / NCTC 13346).